A 445-amino-acid polypeptide reads, in one-letter code: Na(+)-translocating NADH-quinone reductase subunit A (445 aa).

This sequence belongs to the NqrA family. As to quaternary structure, composed of six subunits; NqrA, NqrB, NqrC, NqrD, NqrE and NqrF.

The enzyme catalyses a ubiquinone + n Na(+)(in) + NADH + H(+) = a ubiquinol + n Na(+)(out) + NAD(+). Functionally, NQR complex catalyzes the reduction of ubiquinone-1 to ubiquinol by two successive reactions, coupled with the transport of Na(+) ions from the cytoplasm to the periplasm. NqrA to NqrE are probably involved in the second step, the conversion of ubisemiquinone to ubiquinol. The protein is Na(+)-translocating NADH-quinone reductase subunit A of Marinomonas sp. (strain MWYL1).